The chain runs to 186 residues: Ribosome-recycling factor (186 aa).

The protein belongs to the RRF family.

Its subcellular location is the cytoplasm. In terms of biological role, responsible for the release of ribosomes from messenger RNA at the termination of protein biosynthesis. May increase the efficiency of translation by recycling ribosomes from one round of translation to another. This is Ribosome-recycling factor from Rickettsia africae (strain ESF-5).